The primary structure comprises 162 residues: Ribonuclease (162 aa).

The N-terminal stretch at 1 to 29 (MKKISSVFTMFALIAAILFSGFIPQQAYA) is a signal peptide. Positions 30–53 (ETPLTQTATNETATIQLTSDVHTL) are excised as a propeptide. Glu-125 (proton acceptor) is an active-site residue. His-154 acts as the Proton donor in catalysis.

It belongs to the ribonuclease N1/T1 family.

It is found in the secreted. In terms of biological role, this is a purine-specific ribonuclease. This chain is Ribonuclease, found in Bacillus intermedius.